Consider the following 189-residue polypeptide: GTP cyclohydrolase 1 (189 aa).

Residues Cys79, His82, and Cys150 each coordinate Zn(2+).

The protein belongs to the GTP cyclohydrolase I family. Homomer.

The catalysed reaction is GTP + H2O = 7,8-dihydroneopterin 3'-triphosphate + formate + H(+). It participates in cofactor biosynthesis; 7,8-dihydroneopterin triphosphate biosynthesis; 7,8-dihydroneopterin triphosphate from GTP: step 1/1. This Rickettsia africae (strain ESF-5) protein is GTP cyclohydrolase 1.